Reading from the N-terminus, the 91-residue chain is Mercuric transport protein periplasmic component (91 aa).

The signal sequence occupies residues 1 to 19; sequence MKKLLSALALAAVVAPVWA. The region spanning 22-88 is the HMA domain; that stretch reads QTVTLSVPGM…ATEDAGYPSS (67 aa). Hg(2+) contacts are provided by Cys33 and Cys36.

This sequence belongs to the MerP family. In terms of assembly, monomer.

The protein resides in the periplasm. In terms of biological role, involved in mercury resistance. Acts as a mercury scavenger that specifically binds to a mercuric ion in the periplasm and probably passes it to the cytoplasmic mercuric reductase MerA via the mercuric transport protein MerT. The chain is Mercuric transport protein periplasmic component from Pseudomonas fluorescens.